Here is a 432-residue protein sequence, read N- to C-terminus: Adenosylhomocysteinase (432 aa).

Position 2 is an N-acetylserine (Ser2). Substrate contacts are provided by Thr57, Asp131, and Glu156. Residue Ser183 is modified to Phosphoserine. Positions 183 to 350 are NAD binding; sequence SVTKSKFDNL…EGRLVNLGCA (168 aa). Positions 186 and 190 each coordinate substrate. The residue at position 186 (Lys186) is an N6-(2-hydroxyisobutyryl)lysine. Residue Tyr193 is modified to Phosphotyrosine.

This sequence belongs to the adenosylhomocysteinase family. In terms of assembly, homotetramer. Interaction with AHCYL1. NAD(+) is required as a cofactor.

The protein resides in the cytoplasm. Its subcellular location is the melanosome. It localises to the nucleus. The protein localises to the endoplasmic reticulum. It catalyses the reaction S-adenosyl-L-homocysteine + H2O = L-homocysteine + adenosine. It functions in the pathway amino-acid biosynthesis; L-homocysteine biosynthesis; L-homocysteine from S-adenosyl-L-homocysteine: step 1/1. Functionally, catalyzes the hydrolysis of S-adenosyl-L-homocysteine to form adenosine and homocysteine. Binds copper ions. In Sus scrofa (Pig), this protein is Adenosylhomocysteinase (AHCY).